We begin with the raw amino-acid sequence, 271 residues long: uncharacterized protein (271 aa).

This is an uncharacterized protein from Mycobacterium tuberculosis (strain CDC 1551 / Oshkosh).